We begin with the raw amino-acid sequence, 436 residues long: 3-ketoacyl-CoA thiolase (436 aa).

Catalysis depends on C99, which acts as the Acyl-thioester intermediate. Catalysis depends on proton acceptor residues H392 and C422.

Belongs to the thiolase-like superfamily. Thiolase family. In terms of assembly, heterotetramer of two alpha chains (FadJ) and two beta chains (FadI).

It localises to the cytoplasm. The enzyme catalyses an acyl-CoA + acetyl-CoA = a 3-oxoacyl-CoA + CoA. It participates in lipid metabolism; fatty acid beta-oxidation. In terms of biological role, catalyzes the final step of fatty acid oxidation in which acetyl-CoA is released and the CoA ester of a fatty acid two carbons shorter is formed. In Escherichia coli O157:H7, this protein is 3-ketoacyl-CoA thiolase.